Consider the following 139-residue polypeptide: Cuticle protein 76 (139 aa).

Repeat copies occupy residues 7 to 10 (AAPA), 68 to 71 (AAPA), 75 to 78 (AAPV), 93 to 95 (AAP), 105 to 108 (AAPA), and 121 to 124 (AAPA).

Functionally, component of the cuticle of migratory locust which contains more than 100 different structural proteins. The chain is Cuticle protein 76 from Locusta migratoria (Migratory locust).